The following is a 509-amino-acid chain: Maturase K (509 aa).

This sequence belongs to the intron maturase 2 family. MatK subfamily.

It localises to the plastid. The protein resides in the chloroplast. Functionally, usually encoded in the trnK tRNA gene intron. Probably assists in splicing its own and other chloroplast group II introns. This is Maturase K from Pereskia aculeata (Barbados gooseberry).